Consider the following 254-residue polypeptide: Alcohol dehydrogenase (254 aa).

Residue 10-33 (FVAGLGGIGLDTSREIVKSGPKNL) coordinates NAD(+). Ser138 contacts substrate. The active-site Proton acceptor is the Tyr151.

This sequence belongs to the short-chain dehydrogenases/reductases (SDR) family. As to quaternary structure, homodimer.

The catalysed reaction is a primary alcohol + NAD(+) = an aldehyde + NADH + H(+). The enzyme catalyses a secondary alcohol + NAD(+) = a ketone + NADH + H(+). This chain is Alcohol dehydrogenase (Adh), found in Drosophila heteroneura (Fruit fly).